The following is a 375-amino-acid chain: Growth/differentiation factor 8 (375 aa).

A signal peptide spans 1 to 23 (MQKLQIFVYIYLFMLLVAGPVDL). A propeptide spanning residues 24–266 (NENSEQKENV…VTDTPKRSRR (243 aa)) is cleaved from the precursor. N-linked (GlcNAc...) asparagine glycans are attached at residues Asn-48 and Asn-71. Disulfide bonds link Cys-272-Cys-282, Cys-281-Cys-340, Cys-309-Cys-372, and Cys-313-Cys-374.

The protein belongs to the TGF-beta family. Homodimer; disulfide-linked. Interacts with WFIKKN2, leading to inhibit its activity. Interacts with FSTL3. Post-translationally, synthesized as large precursor molecule that undergoes proteolytic cleavage to generate an N-terminal propeptide and a disulfide linked C-terminal dimer, which is the biologically active molecule. The circulating form consists of a latent complex of the C-terminal dimer and other proteins, including its propeptide, which maintain the C-terminal dimer in a latent, inactive state. Ligand activation requires additional cleavage of the prodomain by a tolloid-like metalloproteinase.

Its subcellular location is the secreted. Acts specifically as a negative regulator of skeletal muscle growth. This Ovis aries (Sheep) protein is Growth/differentiation factor 8 (MSTN).